The following is a 512-amino-acid chain: Lysine--tRNA ligase (512 aa).

Residues Glu-422 and Glu-429 each contribute to the Mg(2+) site.

Belongs to the class-II aminoacyl-tRNA synthetase family. In terms of assembly, homodimer. Mg(2+) serves as cofactor.

It localises to the cytoplasm. The catalysed reaction is tRNA(Lys) + L-lysine + ATP = L-lysyl-tRNA(Lys) + AMP + diphosphate. This chain is Lysine--tRNA ligase, found in Paraburkholderia phymatum (strain DSM 17167 / CIP 108236 / LMG 21445 / STM815) (Burkholderia phymatum).